The primary structure comprises 380 residues: Queuine tRNA-ribosyltransferase (380 aa).

D96 serves as the catalytic Proton acceptor. Residues 96–100, D150, Q193, and G220 contribute to the substrate site; that span reads DSGGF. Residues 251-257 are RNA binding; sequence GVGAPDS. The active-site Nucleophile is the D270. Residues 275–279 form an RNA binding; important for wobble base 34 recognition region; sequence TRIAR. C308, C310, C313, and H339 together coordinate Zn(2+).

The protein belongs to the queuine tRNA-ribosyltransferase family. As to quaternary structure, homodimer. Within each dimer, one monomer is responsible for RNA recognition and catalysis, while the other monomer binds to the replacement base PreQ1. The cofactor is Zn(2+).

The enzyme catalyses 7-aminomethyl-7-carbaguanine + guanosine(34) in tRNA = 7-aminomethyl-7-carbaguanosine(34) in tRNA + guanine. It functions in the pathway tRNA modification; tRNA-queuosine biosynthesis. Catalyzes the base-exchange of a guanine (G) residue with the queuine precursor 7-aminomethyl-7-deazaguanine (PreQ1) at position 34 (anticodon wobble position) in tRNAs with GU(N) anticodons (tRNA-Asp, -Asn, -His and -Tyr). Catalysis occurs through a double-displacement mechanism. The nucleophile active site attacks the C1' of nucleotide 34 to detach the guanine base from the RNA, forming a covalent enzyme-RNA intermediate. The proton acceptor active site deprotonates the incoming PreQ1, allowing a nucleophilic attack on the C1' of the ribose to form the product. After dissociation, two additional enzymatic reactions on the tRNA convert PreQ1 to queuine (Q), resulting in the hypermodified nucleoside queuosine (7-(((4,5-cis-dihydroxy-2-cyclopenten-1-yl)amino)methyl)-7-deazaguanosine). The protein is Queuine tRNA-ribosyltransferase of Streptococcus agalactiae serotype Ia (strain ATCC 27591 / A909 / CDC SS700).